The following is a 443-amino-acid chain: Thymidine phosphorylase (443 aa).

Belongs to the thymidine/pyrimidine-nucleoside phosphorylase family. In terms of assembly, homodimer.

The catalysed reaction is thymidine + phosphate = 2-deoxy-alpha-D-ribose 1-phosphate + thymine. The protein operates within pyrimidine metabolism; dTMP biosynthesis via salvage pathway; dTMP from thymine: step 1/2. Functionally, the enzymes which catalyze the reversible phosphorolysis of pyrimidine nucleosides are involved in the degradation of these compounds and in their utilization as carbon and energy sources, or in the rescue of pyrimidine bases for nucleotide synthesis. This is Thymidine phosphorylase from Shewanella piezotolerans (strain WP3 / JCM 13877).